Consider the following 135-residue polypeptide: Large ribosomal subunit protein uL15 (135 aa).

The tract at residues 21–66 (VGRGQGSGMGKTATRGGKGQTARTGYKAKRGFEGGQQPLQRRLPKI) is disordered.

It belongs to the universal ribosomal protein uL15 family. Part of the 50S ribosomal subunit.

In terms of biological role, binds to the 23S rRNA. The chain is Large ribosomal subunit protein uL15 from Helicobacter pylori (strain HPAG1).